A 105-amino-acid polypeptide reads, in one-letter code: Met repressor (105 aa).

Belongs to the MetJ family. In terms of assembly, homodimer.

The protein resides in the cytoplasm. In terms of biological role, this regulatory protein, when combined with SAM (S-adenosylmethionine) represses the expression of the methionine regulon and of enzymes involved in SAM synthesis. This is Met repressor from Shigella boydii serotype 18 (strain CDC 3083-94 / BS512).